The chain runs to 467 residues: Transcription factor fos-1 (467 aa).

Residues 1 to 22 show a composition bias toward low complexity; it reads MFEQPSSTTNTTTSSGSGSDSN. Disordered stretches follow at residues 1 to 38 and 139 to 179; these read MFEQ…QAHP and QYST…AAAR. The region spanning 163 to 226 is the bZIP domain; that stretch reads DDKRLKRRQR…NSLKNYLETH (64 aa). The tract at residues 165-205 is basic motif; the sequence is KRLKRRQRNKEAAARCRQRRIDLMKELQDQVNDFKNSNDKK. The leucine-zipper stretch occupies residues 212 to 219; the sequence is IRNKLNSL. Disordered regions lie at residues 266 to 291 and 395 to 467; these read RADS…PVED and QPIT…LRPL. Residues 273–286 show a composition bias toward low complexity; it reads SIRSGHSSSSSEQH. Residues 434 to 454 show a composition bias toward polar residues; sequence SSNTGLTPSGQPTMNFVSTPT. 3 positions are modified to phosphothreonine: Thr440, Thr452, and Thr454.

The protein belongs to the bZIP family. Fos subfamily. In terms of assembly, homodimer. Heterodimer; with jun-1. Interacts with kgb-1 and hda-1. Post-translationally, may be phosphorylated by kgb-1. Phosphorylation at Thr-440 increases sensitivity to heavy metal stress. Phosphorylation inhibits homodimer formation, and promotes association with target promoters. As to expression, expressed in anchor cells. Isoform a is expressed in somatic gonad cells that neighbor anchor cells. Isoform b is expressed in vulval cells, the uterine cells that neighbor anchor cells and the spermatheca.

The protein resides in the nucleus. In terms of biological role, developmentally regulated transcription factor which binds and recognizes the enhancer DNA sequence 5'-TGA[CG]TCA-3'. Functionally, plays a role the development of the reproductive system, controlling events including anchor cell (AC) fusion and invasion. Regulates downstream transcriptional targets, including zmp-1, cdh-3, him-4 and mig10b, to promote the removal of the gonadal basement membrane during AC invasion. Regulates aff-1 expression to promote AC fusion. With jun-1 regulates egl-1 and lin-12 expression to allow uterine cell specification and development. Required for ovulation. Controls plc-1 expression in the spermatheca to regulate spermathecal valve dilation. Acts with hda-1 as a downstream repressor of the kgb-1 mediated stress response pathway that transcriptionally represses genes involved in the response to heavy metals, such as kreg-1. This Caenorhabditis elegans protein is Transcription factor fos-1.